We begin with the raw amino-acid sequence, 704 residues long: Polyribonucleotide nucleotidyltransferase (704 aa).

D487 and D493 together coordinate Mg(2+). Positions 554-613 (PRLLTIKIHPDKIREVIGKGGSTIQAITKETGTQIDIQDDGTIIIASVNAIAAQAAKSRI) constitute a KH domain. Positions 623-691 (GRIYEGKVAK…KQGRIRLSIK (69 aa)) constitute an S1 motif domain.

The protein belongs to the polyribonucleotide nucleotidyltransferase family. Component of the RNA degradosome, which is a multiprotein complex involved in RNA processing and mRNA degradation. Mg(2+) is required as a cofactor.

Its subcellular location is the cytoplasm. It carries out the reaction RNA(n+1) + phosphate = RNA(n) + a ribonucleoside 5'-diphosphate. Its function is as follows. Involved in mRNA degradation. Catalyzes the phosphorolysis of single-stranded polyribonucleotides processively in the 3'- to 5'-direction. This chain is Polyribonucleotide nucleotidyltransferase, found in Xanthomonas campestris pv. campestris (strain 8004).